Consider the following 268-residue polypeptide: Protein c-ets-1-B (268 aa).

Positions 131–139 are helix HI-1; sequence FKDYVRDRA. Residues 150–157 are helix HI-2; sequence AAALAGYT. The ETS DNA-binding region spans 162-242; that stretch reads IQLWQFLLEL…AGKRYVYRFV (81 aa). The interval 245–249 is helix H4; it reads LQSLL. A helix H5 region spans residues 253 to 259; it reads PEELHAM.

Belongs to the ETS family. Binds DNA as a homodimer; homodimerization is required for transcription activation.

Its subcellular location is the nucleus. The protein localises to the cytoplasm. Autoinhibited by a module composed of four alpha helices (HI-1, HI-2, H4, and H5) that flank the DNA-binding ETS domain, reducing the affinity for DNA. Transcription factor. Directly controls the expression of cytokine and chemokine genes in a wide variety of different cellular contexts. The protein is Protein c-ets-1-B (ets1-b) of Xenopus laevis (African clawed frog).